Consider the following 243-residue polypeptide: Probable aquaporin SIP1-2 (243 aa).

2 helical membrane-spanning segments follow: residues 12–32 (VITF…AAIV) and 42–62 (WAPL…FTVI). The NPA 1 signature appears at 72 to 74 (NPC). Transmembrane regions (helical) follow at residues 90-110 (FSLA…AITI), 135-155 (GAIS…LIIL), and 162-182 (LAKT…GSKF). The NPA 2 motif lies at 188-190 (NPA). A helical membrane pass occupies residues 210–230 (VYWISSYTGAILSAMLFRIIF).

Belongs to the MIP/aquaporin (TC 1.A.8) family. SIP (TC 1.A.8.10) subfamily. As to expression, expressed in roots and above ground. Expressed in elongating regions of the root tips, cotyledons, minor veins and hydathode cells of the rosette leaves. Weakly expressed in vascular tissues of the flower petals, filaments of stamens, upper part of the styles and receptacles of the siliques.

Its subcellular location is the endoplasmic reticulum membrane. Water channel required to facilitate the transport of water across cell membrane. This Arabidopsis thaliana (Mouse-ear cress) protein is Probable aquaporin SIP1-2 (SIP1-2).